Here is a 483-residue protein sequence, read N- to C-terminus: Probable cytosol aminopeptidase (483 aa).

Positions 252 and 257 each coordinate Mn(2+). Lys264 is a catalytic residue. Mn(2+) contacts are provided by Asp275, Asp334, and Glu336. Arg338 is an active-site residue.

The protein belongs to the peptidase M17 family. Mn(2+) serves as cofactor.

The protein localises to the cytoplasm. It catalyses the reaction Release of an N-terminal amino acid, Xaa-|-Yaa-, in which Xaa is preferably Leu, but may be other amino acids including Pro although not Arg or Lys, and Yaa may be Pro. Amino acid amides and methyl esters are also readily hydrolyzed, but rates on arylamides are exceedingly low.. The catalysed reaction is Release of an N-terminal amino acid, preferentially leucine, but not glutamic or aspartic acids.. Presumably involved in the processing and regular turnover of intracellular proteins. Catalyzes the removal of unsubstituted N-terminal amino acids from various peptides. The chain is Probable cytosol aminopeptidase from Legionella pneumophila (strain Corby).